Reading from the N-terminus, the 516-residue chain is Levanbiose-producing levanase (516 aa).

Topologically, residues 1-5 (MNYIK) are cytoplasmic. A helical membrane pass occupies residues 6–26 (AGKWLTVFLTFLGILLFIDLF). The Extracellular segment spans residues 27–516 (PKEEHDQKTK…TVKHFDSIHE (490 aa)). Substrate is bound by residues 55-58 (WKND), 116-117 (WT), 181-182 (RD), Glu230, and Trp318. Asp58 is an active-site residue.

It belongs to the glycosyl hydrolase 32 family.

It is found in the cell membrane. It carries out the reaction Hydrolysis of (2-&gt;6)-beta-D-fructofuranan, to remove successive disaccharide residues as levanbiose, i.e. 6-(beta-D-fructofuranosyl)-D-fructose, from the end of the chain.. Its function is as follows. Catalyzes the degradation of levan mainly into levanbiose (difructose). Is not active on sucrose. In Bacillus subtilis (strain 168), this protein is Levanbiose-producing levanase (levB).